We begin with the raw amino-acid sequence, 283 residues long: 2-dehydro-3-deoxyphosphooctonate aldolase (283 aa).

Belongs to the KdsA family.

It localises to the cytoplasm. The enzyme catalyses D-arabinose 5-phosphate + phosphoenolpyruvate + H2O = 3-deoxy-alpha-D-manno-2-octulosonate-8-phosphate + phosphate. The protein operates within carbohydrate biosynthesis; 3-deoxy-D-manno-octulosonate biosynthesis; 3-deoxy-D-manno-octulosonate from D-ribulose 5-phosphate: step 2/3. Its pathway is bacterial outer membrane biogenesis; lipopolysaccharide biosynthesis. The sequence is that of 2-dehydro-3-deoxyphosphooctonate aldolase from Methylococcus capsulatus (strain ATCC 33009 / NCIMB 11132 / Bath).